A 285-amino-acid chain; its full sequence is Nurim (285 aa).

At methionine 1–serine 16 the chain is on the nuclear side. The chain crosses the membrane as a helical span at residues leucine 17 to phenylalanine 44. At leucine 45 to glutamine 74 the chain is on the perinuclear space side. A helical transmembrane segment spans residues phenylalanine 75–methionine 96. The Nuclear segment spans residues alanine 97–glutamine 113. Residues arginine 114 to arginine 130 traverse the membrane as a helical segment. The Perinuclear space segment spans residues phenylalanine 131 to tryptophan 149. The helical transmembrane segment at serine 150–leucine 180 threads the bilayer. Residues methionine 181–leucine 207 lie on the Nuclear side of the membrane. The chain crosses the membrane as a helical span at residues tyrosine 208–valine 226. Residues proline 227–aspartate 232 lie on the Perinuclear space side of the membrane. The chain crosses the membrane as a helical span at residues arginine 233–leucine 250. Residues aspartate 251–asparagine 285 lie on the Nuclear side of the membrane.

It belongs to the nurim family.

Its subcellular location is the nucleus inner membrane. The protein is Nurim (nrm) of Xenopus laevis (African clawed frog).